A 166-amino-acid polypeptide reads, in one-letter code: Transcription factor HES-5 (166 aa).

One can recognise a bHLH domain in the interval 16-72 (KNRLRKPVVEKMRRDRINSSIEQLKLLLEQEFARHQPNSKLEKADILEMAVSYLKHS). The Orange domain maps to 88–119 (YSEGYSWCLQEAVQFLTLHAASDTQMKLLYHF). Residues 125 to 166 (PAAPVKETPTPGAAPQPARSSTKAAASVSTSRQSACGLWRPW) form a disordered region. A compositionally biased stretch (low complexity) spans 142 to 156 (ARSSTKAAASVSTSR). Positions 163–166 (WRPW) match the WRPW motif motif.

As to quaternary structure, transcription repression requires formation of a complex with a corepressor protein of the Groucho/TLE family. In terms of tissue distribution, expressed predominantly in embryonic neural lineage cells.

It is found in the nucleus. Transcriptional repressor of genes that require a bHLH protein for their transcription. Plays an important role as neurogenesis negative regulator. The polypeptide is Transcription factor HES-5 (Hes5) (Rattus norvegicus (Rat)).